We begin with the raw amino-acid sequence, 436 residues long: Histidinol dehydrogenase (436 aa).

NAD(+) contacts are provided by Tyr136, Gln198, and Asn221. Positions 244, 266, and 269 each coordinate substrate. 2 residues coordinate Zn(2+): Gln266 and His269. Active-site proton acceptor residues include Glu334 and His335. His335, Asp368, Glu422, and His427 together coordinate substrate. Asp368 contributes to the Zn(2+) binding site. His427 contacts Zn(2+).

The protein belongs to the histidinol dehydrogenase family. The cofactor is Zn(2+).

It carries out the reaction L-histidinol + 2 NAD(+) + H2O = L-histidine + 2 NADH + 3 H(+). The protein operates within amino-acid biosynthesis; L-histidine biosynthesis; L-histidine from 5-phospho-alpha-D-ribose 1-diphosphate: step 9/9. In terms of biological role, catalyzes the sequential NAD-dependent oxidations of L-histidinol to L-histidinaldehyde and then to L-histidine. This Dehalococcoides mccartyi (strain ATCC BAA-2266 / KCTC 15142 / 195) (Dehalococcoides ethenogenes (strain 195)) protein is Histidinol dehydrogenase.